Reading from the N-terminus, the 266-residue chain is Hydroxyethylthiazole kinase (266 aa).

Met46 contributes to the substrate binding site. The ATP site is built by Lys122 and Thr166. Substrate is bound at residue Gly193.

The protein belongs to the Thz kinase family. Mg(2+) serves as cofactor.

The catalysed reaction is 5-(2-hydroxyethyl)-4-methylthiazole + ATP = 4-methyl-5-(2-phosphooxyethyl)-thiazole + ADP + H(+). It participates in cofactor biosynthesis; thiamine diphosphate biosynthesis; 4-methyl-5-(2-phosphoethyl)-thiazole from 5-(2-hydroxyethyl)-4-methylthiazole: step 1/1. Functionally, catalyzes the phosphorylation of the hydroxyl group of 4-methyl-5-beta-hydroxyethylthiazole (THZ). In Caldivirga maquilingensis (strain ATCC 700844 / DSM 13496 / JCM 10307 / IC-167), this protein is Hydroxyethylthiazole kinase.